Here is a 178-residue protein sequence, read N- to C-terminus: Protein GrpE (178 aa).

Residues 1 to 11 (MADELSEKSVE) show a composition bias toward basic and acidic residues. The tract at residues 1 to 32 (MADELSEKSVEGTEEDGESAPAEGTTEGVPVD) is disordered.

The protein belongs to the GrpE family. In terms of assembly, homodimer.

The protein resides in the cytoplasm. Its function is as follows. Participates actively in the response to hyperosmotic and heat shock by preventing the aggregation of stress-denatured proteins, in association with DnaK and GrpE. It is the nucleotide exchange factor for DnaK and may function as a thermosensor. Unfolded proteins bind initially to DnaJ; upon interaction with the DnaJ-bound protein, DnaK hydrolyzes its bound ATP, resulting in the formation of a stable complex. GrpE releases ADP from DnaK; ATP binding to DnaK triggers the release of the substrate protein, thus completing the reaction cycle. Several rounds of ATP-dependent interactions between DnaJ, DnaK and GrpE are required for fully efficient folding. This Methanothrix thermoacetophila (strain DSM 6194 / JCM 14653 / NBRC 101360 / PT) (Methanosaeta thermophila) protein is Protein GrpE.